Here is a 160-residue protein sequence, read N- to C-terminus: S-ribosylhomocysteine lyase (160 aa).

3 residues coordinate Fe cation: H57, H61, and C127.

It belongs to the LuxS family. Homodimer. It depends on Fe cation as a cofactor.

It catalyses the reaction S-(5-deoxy-D-ribos-5-yl)-L-homocysteine = (S)-4,5-dihydroxypentane-2,3-dione + L-homocysteine. Its function is as follows. Involved in the synthesis of autoinducer 2 (AI-2) which is secreted by bacteria and is used to communicate both the cell density and the metabolic potential of the environment. The regulation of gene expression in response to changes in cell density is called quorum sensing. Catalyzes the transformation of S-ribosylhomocysteine (RHC) to homocysteine (HC) and 4,5-dihydroxy-2,3-pentadione (DPD). The protein is S-ribosylhomocysteine lyase of Streptococcus gordonii (strain Challis / ATCC 35105 / BCRC 15272 / CH1 / DL1 / V288).